Consider the following 455-residue polypeptide: Guanine/hypoxanthine permease GhxQ (455 aa).

The Cytoplasmic portion of the chain corresponds to 1–31 (MSGDILQTPDAPKPQGALDNYFKITARGSTV). Residues 32–55 (RQEVLAGLTTFLAMVYSVIVVPGM) traverse the membrane as a helical segment. At 56–65 (LGKAGFPPAA) the chain is on the periplasmic side. Residues 66-84 (VFVATCLVAGFGSLLMGLW) form a helical membrane-spanning segment. The Cytoplasmic segment spans residues 85-86 (AN). A discontinuously helical membrane pass occupies residues 87 to 103 (LPMAIGCAISLTAFTAF). Over 104–115 (SLVLGQQISVPV) the chain is Periplasmic. A helical membrane pass occupies residues 116–135 (ALGAVFLMGVIFTAISVTGV). The Cytoplasmic segment spans residues 136–147 (RTWILRNLPMGI). Residues 148-168 (AHGTGIGIGLFLLLIAANGVG) form a helical membrane-spanning segment. The Periplasmic segment spans residues 169–186 (MVIKNPIEGLPVALGAFT). A helical membrane pass occupies residues 187 to 204 (SFPVMMSLLGLAVIFGLE). Over 205 to 208 (KCRV) the chain is Cytoplasmic. A helical transmembrane segment spans residues 209–228 (PGGILLVIIAISIIGLIFDP). Over 229–260 (AVKYHGLVAMPSLTGEDGKSLIFSLDIMGALQ) the chain is Periplasmic. The helical transmembrane segment at 261-289 (PTVLPSVLALVMTAVFDATGTIRAVAGQA) threads the bilayer. Topologically, residues 290–302 (NLLDKDNQIINGG) are cytoplasmic. The helical transmembrane segment at 303–318 (KALTSDSVSSIFSGLV) threads the bilayer. Over 319–320 (GA) the chain is Periplasmic. Residues 321–336 (APAAVYIESAAGTAAG) traverse the membrane as a discontinuously helical segment. The Cytoplasmic portion of the chain corresponds to 337-340 (GKTG). The helical transmembrane segment at 341 to 355 (LTATVVGALFLLILF) threads the bilayer. At 356-366 (LSPLSFLIPGY) the chain is on the periplasmic side. A helical membrane pass occupies residues 367 to 386 (ATAPALMYVGLLMLSNVSKL). The Cytoplasmic portion of the chain corresponds to 387–391 (DFNDF). An intramembrane region (discontinuously helical) is located at residues 392–427 (IDAMAGLVCAVFIVLTCNIVTGIMLGFVTLVVGRVF). Residues 428–455 (AREWQKLNIGTVIITAALVAFYAGGWAI) lie on the Cytoplasmic side of the membrane.

It belongs to the nucleobase:cation symporter-2 (NCS2) (TC 2.A.40) family. Azg-like subfamily.

The protein localises to the cell membrane. Its function is as follows. High-affinity transporter for guanine and hypoxanthine. This Escherichia coli (strain K12) protein is Guanine/hypoxanthine permease GhxQ (ghxQ).